The chain runs to 426 residues: D-cysteine desulfhydrase 1, mitochondrial (426 aa).

Residues methionine 1 to tyrosine 63 constitute a mitochondrion transit peptide. Lysine 119 carries the N6-(pyridoxal phosphate)lysine modification. Serine 146 functions as the Nucleophile in the catalytic mechanism.

It belongs to the ACC deaminase/D-cysteine desulfhydrase family. In terms of assembly, homodimer. Pyridoxal 5'-phosphate is required as a cofactor. Present in seeds (at protein level).

It is found in the mitochondrion. It catalyses the reaction D-cysteine + H2O = hydrogen sulfide + pyruvate + NH4(+) + H(+). With respect to regulation, inhibited by L-cysteine (L-cys). Its function is as follows. Catalyzes the production of hydrogen sulfide (H2S) from D-cysteine (D-cys). The protein is D-cysteine desulfhydrase 1, mitochondrial of Oryza sativa subsp. japonica (Rice).